The sequence spans 202 residues: MATNITWHPNLTYDERKELRKQDGCTVWLTGLSASGKSTIACALEQLLLQKNLSAYRLDGDNIRFGLNKDLGFSEKDRNENIRRISEVSKLFADSCAVSITSFISPYRVDRDRARDLHKEAGLKFIEIFVDVPLEVAEQRDPKGLYKKAREGVIKEFTGISAPYEAPKAPELHLRTDQKTVEECAAIIYEYLVNEKIIRKHL.

31–38 (GLSASGKS) provides a ligand contact to ATP. The Phosphoserine intermediate role is filled by S105.

The protein belongs to the APS kinase family.

The catalysed reaction is adenosine 5'-phosphosulfate + ATP = 3'-phosphoadenylyl sulfate + ADP + H(+). It functions in the pathway sulfur metabolism; hydrogen sulfide biosynthesis; sulfite from sulfate: step 2/3. In terms of biological role, catalyzes the synthesis of activated sulfate. This chain is Adenylyl-sulfate kinase (MET14), found in Saccharomyces pastorianus (Lager yeast).